Consider the following 495-residue polypeptide: Probable endopolygalacturonase D (495 aa).

The N-terminal stretch at 1–16 (MKRSALLASFLPLALG) is a signal peptide. Cys154 and Cys169 are joined by a disulfide. 3 PbH1 repeats span residues 261 to 283 (MYNS…EIEN), 284 to 322 (TEYL…DIKQ), and 323 to 344 (SDFL…AVTS). Asn295 is a glycosylation site (N-linked (GlcNAc...) asparagine). The active-site Proton donor is Asp337. Cys339 and Cys355 are disulfide-bonded. Residue His359 is part of the active site. Asn371 carries an N-linked (GlcNAc...) asparagine glycan. 2 PbH1 repeats span residues 374–395 (VDGV…RIKS) and 403–425 (VYNV…DIQQ). Residues Asn410 and Asn444 are each glycosylated (N-linked (GlcNAc...) asparagine). 2 disulfide bridges follow: Cys464–Cys469 and Cys487–Cys494. Residues 469 to 492 (CSNFVFTDVDITGGSDDSCNYPSS) form a PbH1 6 repeat.

Belongs to the glycosyl hydrolase 28 family.

The protein localises to the secreted. It catalyses the reaction (1,4-alpha-D-galacturonosyl)n+m + H2O = (1,4-alpha-D-galacturonosyl)n + (1,4-alpha-D-galacturonosyl)m.. Its function is as follows. Involved in maceration and soft-rotting of plant tissue. Hydrolyzes the 1,4-alpha glycosidic bonds of de-esterified pectate in the smooth region of the plant cell wall. This is Probable endopolygalacturonase D (pgaD) from Aspergillus niger (strain ATCC MYA-4892 / CBS 513.88 / FGSC A1513).